A 250-amino-acid polypeptide reads, in one-letter code: tRNA (guanine-N(1)-)-methyltransferase (250 aa).

S-adenosyl-L-methionine is bound by residues Gly-116 and 136-141 (IGDYVL).

This sequence belongs to the RNA methyltransferase TrmD family. Homodimer.

Its subcellular location is the cytoplasm. The catalysed reaction is guanosine(37) in tRNA + S-adenosyl-L-methionine = N(1)-methylguanosine(37) in tRNA + S-adenosyl-L-homocysteine + H(+). Functionally, specifically methylates guanosine-37 in various tRNAs. This chain is tRNA (guanine-N(1)-)-methyltransferase, found in Pseudomonas putida (strain ATCC 700007 / DSM 6899 / JCM 31910 / BCRC 17059 / LMG 24140 / F1).